Consider the following 257-residue polypeptide: Diacetyl reductase [(S)-acetoin forming] (257 aa).

Residue 6–30 (IITGSAGGLGKGIAERLANDGFNIV) coordinates NAD(+). Ser-139 is a substrate binding site. The Proton acceptor role is filled by Tyr-152. Residue Lys-156 is part of the active site.

This sequence belongs to the short-chain dehydrogenases/reductases (SDR) family.

The enzyme catalyses (S)-acetoin + NAD(+) = diacetyl + NADH + H(+). In terms of biological role, catalyzes the irreversible reduction of 2,3-butanediol to (S)-acetoin in the presence of NADH. The polypeptide is Diacetyl reductase [(S)-acetoin forming] (butA) (Staphylococcus epidermidis (strain ATCC 35984 / DSM 28319 / BCRC 17069 / CCUG 31568 / BM 3577 / RP62A)).